Consider the following 173-residue polypeptide: uncharacterized protein (173 aa).

The MSP domain maps to Asp-16 to Lys-133. A compositionally biased stretch (basic and acidic residues) spans Lys-141–Gly-163. The disordered stretch occupies residues Lys-141–Lys-173.

This is an uncharacterized protein from Caenorhabditis elegans.